Reading from the N-terminus, the 137-residue chain is ATP synthase epsilon chain (137 aa).

Belongs to the ATPase epsilon chain family. F-type ATPases have 2 components, CF(1) - the catalytic core - and CF(0) - the membrane proton channel. CF(1) has five subunits: alpha(3), beta(3), gamma(1), delta(1), epsilon(1). CF(0) has three main subunits: a, b and c.

Its subcellular location is the cell membrane. In terms of biological role, produces ATP from ADP in the presence of a proton gradient across the membrane. This chain is ATP synthase epsilon chain, found in Caldicellulosiruptor saccharolyticus (strain ATCC 43494 / DSM 8903 / Tp8T 6331).